A 191-amino-acid chain; its full sequence is Fe/S biogenesis protein NfuA (191 aa).

[4Fe-4S] cluster is bound by residues cysteine 149 and cysteine 152.

It belongs to the NfuA family. In terms of assembly, homodimer. [4Fe-4S] cluster is required as a cofactor.

Involved in iron-sulfur cluster biogenesis. Binds a 4Fe-4S cluster, can transfer this cluster to apoproteins, and thereby intervenes in the maturation of Fe/S proteins. Could also act as a scaffold/chaperone for damaged Fe/S proteins. The polypeptide is Fe/S biogenesis protein NfuA (Cronobacter sakazakii (strain ATCC BAA-894) (Enterobacter sakazakii)).